Reading from the N-terminus, the 302-residue chain is Oxygen-dependent coproporphyrinogen-III oxidase (302 aa).

Ser-94 contributes to the substrate binding site. The a divalent metal cation site is built by His-98 and His-108. The active-site Proton donor is His-108. 110–112 serves as a coordination point for substrate; sequence NVR. Residues His-147 and His-177 each coordinate a divalent metal cation. The tract at residues 242–277 is important for dimerization; sequence YVEFNLVWDRGTLFGLQSGGRTESILMSMPPLVRWE. Position 260–262 (260–262) interacts with substrate; the sequence is GGR.

The protein belongs to the aerobic coproporphyrinogen-III oxidase family. In terms of assembly, homodimer. The cofactor is a divalent metal cation.

The protein resides in the cytoplasm. It catalyses the reaction coproporphyrinogen III + O2 + 2 H(+) = protoporphyrinogen IX + 2 CO2 + 2 H2O. It participates in porphyrin-containing compound metabolism; protoporphyrin-IX biosynthesis; protoporphyrinogen-IX from coproporphyrinogen-III (O2 route): step 1/1. Involved in the heme biosynthesis. Catalyzes the aerobic oxidative decarboxylation of propionate groups of rings A and B of coproporphyrinogen-III to yield the vinyl groups in protoporphyrinogen-IX. The sequence is that of Oxygen-dependent coproporphyrinogen-III oxidase from Chromobacterium violaceum (strain ATCC 12472 / DSM 30191 / JCM 1249 / CCUG 213 / NBRC 12614 / NCIMB 9131 / NCTC 9757 / MK).